The sequence spans 68 residues: Protein transport protein Sec61 gamma-1 subunit (68 aa).

The Cytoplasmic segment spans residues 1-32 (MDKVVKFAEPGRAFAKDSIRLVKRCTKPDRKE). Residues 33 to 61 (FQKIAIATAVGFAIMGFIGFFVKLIHIPI) traverse the membrane as a helical segment. The Extracellular segment spans residues 62-68 (NNIIVGS).

It belongs to the SecE/SEC61-gamma family. Heterotrimeric complex composed of SEC61-alpha, SEC61-beta and SEC61-gamma.

It localises to the endoplasmic reticulum membrane. Its function is as follows. Necessary for protein translocation in the endoplasmic reticulum. The chain is Protein transport protein Sec61 gamma-1 subunit (SEC61G1) from Drosophila melanogaster (Fruit fly).